Consider the following 100-residue polypeptide: ATP synthase subunit g 2, mitochondrial (100 aa).

It belongs to the ATPase g subunit family. In terms of assembly, F-type ATPases have 2 components, CF(1) - the catalytic core - and CF(0) - the membrane proton channel. CF(0) seems to have nine subunits: a, b, c, d, e, f, g, F6 and 8 (or A6L).

The protein resides in the mitochondrion membrane. Its function is as follows. Mitochondrial membrane ATP synthase (F(1)F(0) ATP synthase or Complex V) produces ATP from ADP in the presence of a proton gradient across the membrane which is generated by electron transport complexes of the respiratory chain. F-type ATPases consist of two structural domains, F(1) - containing the extramembraneous catalytic core, and F(0) - containing the membrane proton channel, linked together by a central stalk and a peripheral stalk. During catalysis, ATP synthesis in the catalytic domain of F(1) is coupled via a rotary mechanism of the central stalk subunits to proton translocation. Part of the complex F(0) domain. Minor subunit located with subunit a in the membrane. The protein is ATP synthase subunit g 2, mitochondrial of Homo sapiens (Human).